We begin with the raw amino-acid sequence, 350 residues long: Palmitoyltransferase erf2 (350 aa).

Over 1–86 (MSYEKHSDAK…RLQMSSQYKA (86 aa)) the chain is Cytoplasmic. The helical transmembrane segment at 87-107 (FLISLFALILPGVLFFIFSAF) threads the bilayer. Over 108-112 (WLWHH) the chain is Lumenal. Residues 113 to 133 (VSPAVPITFAYLYALAVVSMF) traverse the membrane as a helical segment. The Cytoplasmic portion of the chain corresponds to 134-225 (KCSTADPGIL…NTCIGRRNYR (92 aa)). A DHHC domain is found at 182-232 (VYCHTCHLYRPPRASHCHLCDNCVEYLDHHCIWLNTCIGRRNYRYYFIFLL). Residue Cys212 is the S-palmitoyl cysteine intermediate of the active site. Residues 226 to 246 (YYFIFLLSVVLSALYLTGLGF) traverse the membrane as a helical segment. Residues 247-270 (YTSIGSFHESTDTNFAAHLRRPWA) lie on the Lumenal side of the membrane. The helical transmembrane segment at 271 to 291 (GVSFFLGIYGALGAILPGILF) threads the bilayer. The Cytoplasmic portion of the chain corresponds to 292–350 (CYQCYLISVGQNVHEYLRAKSTETEDVHPFHDSIWLNFLVVLCRPKNVSYVRPTRKSYV).

Belongs to the DHHC palmitoyltransferase family. ERF2/ZDHHC9 subfamily. As to quaternary structure, interacts with erf4. In terms of processing, autopalmitoylated.

It is found in the endoplasmic reticulum membrane. It localises to the golgi apparatus. The protein resides in the golgi stack membrane. The enzyme catalyses L-cysteinyl-[protein] + hexadecanoyl-CoA = S-hexadecanoyl-L-cysteinyl-[protein] + CoA. The erf2-erf4 complex is a palmitoyltransferase with a major role in driving sexual development. Palmitoylates ras1. Palmitoylates isp3. Palmitoylates rho3. This Schizosaccharomyces pombe (strain 972 / ATCC 24843) (Fission yeast) protein is Palmitoyltransferase erf2.